The chain runs to 318 residues: Methionyl-tRNA formyltransferase (318 aa).

112–115 (SILP) serves as a coordination point for (6S)-5,6,7,8-tetrahydrofolate.

It belongs to the Fmt family.

The catalysed reaction is L-methionyl-tRNA(fMet) + (6R)-10-formyltetrahydrofolate = N-formyl-L-methionyl-tRNA(fMet) + (6S)-5,6,7,8-tetrahydrofolate + H(+). Its function is as follows. Attaches a formyl group to the free amino group of methionyl-tRNA(fMet). The formyl group appears to play a dual role in the initiator identity of N-formylmethionyl-tRNA by promoting its recognition by IF2 and preventing the misappropriation of this tRNA by the elongation apparatus. The polypeptide is Methionyl-tRNA formyltransferase (Shewanella baltica (strain OS155 / ATCC BAA-1091)).